The sequence spans 544 residues: Phosphoenolpyruvate carboxykinase (ATP) (544 aa).

246 to 253 serves as a coordination point for ATP; that stretch reads GLSGTGKT.

The protein belongs to the phosphoenolpyruvate carboxykinase (ATP) family.

It carries out the reaction oxaloacetate + ATP = phosphoenolpyruvate + ADP + CO2. The protein operates within carbohydrate biosynthesis; gluconeogenesis. This chain is Phosphoenolpyruvate carboxykinase (ATP) (PCK1), found in Candida glabrata (strain ATCC 2001 / BCRC 20586 / JCM 3761 / NBRC 0622 / NRRL Y-65 / CBS 138) (Yeast).